Consider the following 263-residue polypeptide: Adaptin ear-binding coat-associated protein 2 (263 aa).

Disordered stretches follow at residues 166-194 (KKKE…PPGG) and 219-263 (APSS…WVQF). Serine 181 carries the phosphoserine modification. 2 short sequence motifs (WXXF motif) span residues 240–243 (WGDF) and 260–263 (WVQF). Residues 246 to 263 (STGSTSSQTQPGTGWVQF) are compositionally biased toward low complexity.

Belongs to the NECAP family. Interacts with AP1G1 and AP2A1 components of the adapter protein complexes AP-1 and AP-2. Interacts with the GAE domain proteins GGA1, GGA2 and GGA3.

It is found in the cytoplasmic vesicle. The protein resides in the clathrin-coated vesicle membrane. The protein localises to the cell membrane. Its function is as follows. Involved in endocytosis. The protein is Adaptin ear-binding coat-associated protein 2 (NECAP2) of Homo sapiens (Human).